The following is a 164-amino-acid chain: Phosphohistidine phosphatase SixA homolog (164 aa).

The protein belongs to the SixA phosphatase family.

The chain is Phosphohistidine phosphatase SixA homolog (sixA-A) from Haemophilus influenzae (strain ATCC 51907 / DSM 11121 / KW20 / Rd).